The following is a 622-amino-acid chain: MFDIKEQLKLLPDKPGVYLMKNKANEIIYVGKAISLKNRVRQYFQSSNNQHPKVRAMVTHINFFEYIVTDSELEALILECNLIKENRPKYNVLLRDDKTYPYIKVTMNETFPRVLKTRKVLKDKAKYFGPYTNISALNETLEVIHQMYPIRVCGKNIEKMIERQERPCLNYHIRKCIGPCTGMVNDETYQQMIHEIILFLGGKEDELIKKIEEKMKRAAEKMDFEGAAHYRDQRQALLDIIERQKVVSVNDIDQDIIAMAKGEQESCVQVFFVRGGKLVQREHYILTTREDEDEKEILSAFIKQFYGETNFIPKEVLVEREVEDQELMAQWLTNKRGNHVKVRAPLRGEKKSMIQLVKRNAALTMGQREETQRKSKEKTEGAMVVLQEALGLADAIHRVEAFDISNTQGMESVGSMVVFEGGKPKNKDYRRFKIKTIQGANDYGSIEEIIYRRYKRGVDETKAMIENTMTVQEGKFSLFPDLIMVDGGLGQVTSVKKGLAALGILIPVCGMVKDERHRTRGLVYEGKEIPIERPSHLLRFITQVQDEVHRFAITYHRSLRTKSILHSVLEDIPGIGEKRRKSLMKHFESIDKMKQATIEELIEVEGLNRKVAENMYHFFRKQ.

The region spanning 13–92 is the GIY-YIG domain; that stretch reads DKPGVYLMKN…IKENRPKYNV (80 aa). The region spanning 205-240 is the UVR domain; the sequence is DELIKKIEEKMKRAAEKMDFEGAAHYRDQRQALLDI.

It belongs to the UvrC family. As to quaternary structure, interacts with UvrB in an incision complex.

Its subcellular location is the cytoplasm. Its function is as follows. The UvrABC repair system catalyzes the recognition and processing of DNA lesions. UvrC both incises the 5' and 3' sides of the lesion. The N-terminal half is responsible for the 3' incision and the C-terminal half is responsible for the 5' incision. The chain is UvrABC system protein C from Alkaliphilus metalliredigens (strain QYMF).